The chain runs to 424 residues: L-glutamine:2-deoxy-scyllo-inosose aminotransferase (424 aa).

K202 is subject to N6-(pyridoxal phosphate)lysine.

Belongs to the DegT/DnrJ/EryC1 family. L-glutamine:2-deoxy-scyllo-inosose/scyllo-inosose aminotransferase subfamily. Requires pyridoxal 5'-phosphate as cofactor.

The catalysed reaction is 2-deoxy-L-scyllo-inosose + L-glutamine = 2-deoxy-scyllo-inosamine + 2-oxoglutaramate. The enzyme catalyses 3-amino-2,3-dideoxy-scyllo-inosose + L-glutamine = 2-deoxystreptamine + 2-oxoglutaramate. It participates in metabolic intermediate biosynthesis; 2-deoxystreptamine biosynthesis; 2-deoxystreptamine from D-glucose 6-phosphate: step 2/4. It functions in the pathway antibiotic biosynthesis; tobramycin biosynthesis. Catalyzes the PLP-dependent transamination of 2-deoxy-scyllo-inosose (2-DOI) to form 2-deoxy-scyllo-inosamine (2-DOIA) using L-glutamine as the amino donor. Also catalyzes the transamination of 3-amino-2,3-dideoxy-scyllo-inosose (keto-2-DOIA) into 2-deoxystreptamine (2-DOS). This Streptoalloteichus tenebrarius (strain ATCC 17920 / DSM 40477 / JCM 4838 / CBS 697.72 / NBRC 16177 / NCIMB 11028 / NRRL B-12390 / A12253. 1 / ISP 5477) (Streptomyces tenebrarius) protein is L-glutamine:2-deoxy-scyllo-inosose aminotransferase (tbmB).